Reading from the N-terminus, the 1119-residue chain is DNA-directed RNA polymerase subunit beta (1119 aa).

The protein belongs to the RNA polymerase beta chain family. In terms of assembly, the RNAP catalytic core consists of 2 alpha, 1 beta, 1 beta' and 1 omega subunit. When a sigma factor is associated with the core the holoenzyme is formed, which can initiate transcription.

It carries out the reaction RNA(n) + a ribonucleoside 5'-triphosphate = RNA(n+1) + diphosphate. In terms of biological role, DNA-dependent RNA polymerase catalyzes the transcription of DNA into RNA using the four ribonucleoside triphosphates as substrates. The protein is DNA-directed RNA polymerase subunit beta of Thermus thermophilus (strain ATCC 27634 / DSM 579 / HB8).